The sequence spans 163 residues: MLVFTTSPDHVDELNEFVQQLNPVAFTRVLRGLGKVLASYNDKAVEEDTLKKSSTGSLPSGQQVHCQYVLDDPNHVEGISVDQSLQVPKFEKNWLISPPGSPPVGWEPIVEESPNSQHLAHDIQLKLDELGNALLNDHSAGPQIVISEHNNTKETSPSRQFEH.

Positions 142–163 (PQIVISEHNNTKETSPSRQFEH) are disordered. A compositionally biased stretch (polar residues) spans 153 to 163 (KETSPSRQFEH).

This sequence belongs to the RCAN family.

Its function is as follows. Inhibits calcineurin-dependent transcriptional responses by binding to the catalytic domain of calcineurin. This is an uncharacterized protein from Schizosaccharomyces pombe (strain 972 / ATCC 24843) (Fission yeast).